The following is a 283-amino-acid chain: 5'-nucleotidase SurE (283 aa).

Positions 14, 15, 47, and 105 each coordinate a divalent metal cation.

The protein belongs to the SurE nucleotidase family. A divalent metal cation serves as cofactor.

It is found in the cytoplasm. It carries out the reaction a ribonucleoside 5'-phosphate + H2O = a ribonucleoside + phosphate. In terms of biological role, nucleotidase that shows phosphatase activity on nucleoside 5'-monophosphates. The chain is 5'-nucleotidase SurE from Chlamydia trachomatis serovar A (strain ATCC VR-571B / DSM 19440 / HAR-13).